Here is a 936-residue protein sequence, read N- to C-terminus: Periplasmic nitrate reductase (936 aa).

Positions 1–31 (MALSRRDFLKSSAAAAAASAVGLSVPKEVEA) form a signal peptide, tat-type signal. Residues 40–96 (WRWDKAVCRFCGTGCGIMIATKDDRIVAVKGDPLAPVNRGLNCIKGYFTAKIMYGAD) enclose the 4Fe-4S Mo/W bis-MGD-type domain. 4 residues coordinate [4Fe-4S] cluster: cysteine 47, cysteine 50, cysteine 54, and cysteine 82. Residues lysine 84, glutamine 152, asparagine 177, cysteine 181, 214–221 (WGSNMAEM), 246–250 (STYTH), methionine 424, glutamine 428, asparagine 534, 559–560 (SD), lysine 582, aspartate 609, and 826–835 (TGRVLEHWHS) contribute to the Mo-bis(molybdopterin guanine dinucleotide) site. Tryptophan 902 contributes to the substrate binding site. The Mo-bis(molybdopterin guanine dinucleotide) site is built by asparagine 910 and lysine 927.

This sequence belongs to the prokaryotic molybdopterin-containing oxidoreductase family. NasA/NapA/NarB subfamily. Component of the periplasmic nitrate reductase NapAB complex composed of NapA and NapB. [4Fe-4S] cluster is required as a cofactor. Mo-bis(molybdopterin guanine dinucleotide) serves as cofactor. In terms of processing, predicted to be exported by the Tat system. The position of the signal peptide cleavage has not been experimentally proven.

The protein localises to the periplasm. It catalyses the reaction 2 Fe(II)-[cytochrome] + nitrate + 2 H(+) = 2 Fe(III)-[cytochrome] + nitrite + H2O. Functionally, catalytic subunit of the periplasmic nitrate reductase complex NapAB. Receives electrons from NapB and catalyzes the reduction of nitrate to nitrite. This Nitratiruptor sp. (strain SB155-2) protein is Periplasmic nitrate reductase.